The chain runs to 402 residues: Caspase-1 (402 aa).

Residues 1-91 form the CARD domain; it reads MADKILRAKR…YLAGILELQS (91 aa). The propeptide occupies 1-118; sequence MADKILRAKR…PSSSETKEEQ (118 aa). Residues 98 to 125 are disordered; the sequence is FVATEDSKGGHPSSSETKEEQNKEDGTF. The span at 113 to 123 shows a compositional bias: basic and acidic residues; sequence ETKEEQNKEDG. Residues H236 and C284 contribute to the active site. Residues 297–314 constitute a propeptide that is removed on maturation; sequence SVRDSEEDFLTDAIFEDD. S301 is subject to Phosphoserine. R343 bears the Omega-N-methylarginine mark.

This sequence belongs to the peptidase C14A family. In terms of assembly, heterotetramer that consists of two anti-parallel arranged heterodimers, each one formed by a 20 kDa (Caspase-1 subunit p20) and a 10 kDa (Caspase-1 subunit p10) subunit. May be a component of the inflammasome, a protein complex which also includes PYCARD, CARD8 and NLRP2 and whose function would be the activation of pro-inflammatory caspases. Component of the AIM2 PANoptosome complex, a multiprotein complex that drives inflammatory cell death (PANoptosis). Both the p10 and p20 subunits interact with MEFV. Interacts with CARD17P/INCA and CARD18. Interacts with SERPINB1; this interaction regulates CASP1 activity. Heterotetramer that consists of two anti-parallel arranged heterodimers, each one formed by a 20 kDa (Caspase-1 subunit p20) and a 10 kDa (Caspase-1 subunit p10) subunit. In terms of processing, the two subunits are derived from the precursor sequence by an autocatalytic mechanism. Post-translationally, ubiquitinated via 'Lys-11'-linked polyubiquitination. Deubiquitinated by USP8. High level expression seen in spleen and lung, low level expression seen in brain, heart, liver, kidney, testis and skeletal muscle.

Its subcellular location is the cytoplasm. It is found in the cell membrane. It carries out the reaction Strict requirement for an Asp residue at position P1 and has a preferred cleavage sequence of Tyr-Val-Ala-Asp-|-.. In terms of biological role, thiol protease involved in a variety of inflammatory processes by proteolytically cleaving other proteins, such as the precursors of the inflammatory cytokines interleukin-1 beta (IL1B) and interleukin 18 (IL18) as well as the pyroptosis inducer Gasdermin-D (GSDMD), into active mature peptides. Plays a key role in cell immunity as an inflammatory response initiator: once activated through formation of an inflammasome complex, it initiates a pro-inflammatory response through the cleavage of the two inflammatory cytokines IL1B and IL18, releasing the mature cytokines which are involved in a variety of inflammatory processes. Cleaves a tetrapeptide after an Asp residue at position P1. Also initiates pyroptosis, a programmed lytic cell death pathway, through cleavage of GSDMD. In contrast to cleavage of interleukin IL1B, recognition and cleavage of GSDMD is not strictly dependent on the consensus cleavage site but depends on an exosite interface on CASP1 that recognizes and binds the Gasdermin-D, C-terminal (GSDMD-CT) part. Cleaves and activates CASP7 in response to bacterial infection, promoting plasma membrane repair. Upon inflammasome activation, during DNA virus infection but not RNA virus challenge, controls antiviral immunity through the cleavage of CGAS, rendering it inactive. In apoptotic cells, cleaves SPHK2 which is released from cells and remains enzymatically active extracellularly. This chain is Caspase-1 (Casp1), found in Mus musculus (Mouse).